We begin with the raw amino-acid sequence, 135 residues long: Galectin-1 (135 aa).

Residue A2 is modified to N-acetylalanine. Residues G4–E135 enclose the Galectin domain. Residues K13, K19, and K29 each carry the N6-acetyllysine modification. S30 is modified (phosphoserine). A beta-D-galactoside is bound by residues H45 to R49, H53, N62, and W69 to E72. The residue at position 108 (K108) is an N6-acetyllysine; alternate. K108 is modified (N6-succinyllysine; alternate). The residue at position 128 (K128) is an N6-acetyllysine.

In terms of assembly, homodimer. Binds LGALS3BP. Interacts with CD2, CD3, CD4, CD6, CD7, CD43, ALCAM and CD45. Interacts with laminin (via poly-N-acetyllactosamine). Interacts with SUSD2. Interacts with cargo receptor TMED10; the interaction mediates the translocation from the cytoplasm into the ERGIC (endoplasmic reticulum-Golgi intermediate compartment) and thereby secretion. Interacts with CD69.

It localises to the secreted. It is found in the extracellular space. Its subcellular location is the extracellular matrix. The protein resides in the cytoplasm. In terms of biological role, lectin that binds beta-galactoside and a wide array of complex carbohydrates. Plays a role in regulating apoptosis, cell proliferation and cell differentiation. Inhibits CD45 protein phosphatase activity and therefore the dephosphorylation of Lyn kinase. Strong inducer of T-cell apoptosis. Plays a negative role in Th17 cell differentiation via activation of the receptor CD69. In Rattus norvegicus (Rat), this protein is Galectin-1 (Lgals1).